The sequence spans 222 residues: MRIAIDGPAGAGKSTVARILAKKLSFTYLDTGAMYRAVTVLFLENNLSLEDENGIKRLLEKTDIKIIPGDEGQKILLNERDVTELIRTPQVSELVAKVSALPEVRKYLTELQRKIIAKGNVVADGRDIGTVVMPEAEVKIFLTASAEERARRRHRELLAKGYEVSYEEVFREVLKRDELDTTREISPLRKAEDAILVDTTGLKIEEVVAKLLEIIGRKNDVL.

7-15 lines the ATP pocket; that stretch reads GPAGAGKST.

This sequence belongs to the cytidylate kinase family. Type 1 subfamily.

The protein resides in the cytoplasm. It catalyses the reaction CMP + ATP = CDP + ADP. The enzyme catalyses dCMP + ATP = dCDP + ADP. This is Cytidylate kinase from Carboxydothermus hydrogenoformans (strain ATCC BAA-161 / DSM 6008 / Z-2901).